A 70-amino-acid polypeptide reads, in one-letter code: Acyl carrier protein (70 aa).

The 69-residue stretch at 2–70 folds into the Carrier domain; the sequence is SDIADRVKKI…ETIQTFGDAP (69 aa). Ser-37 carries the post-translational modification O-(pantetheine 4'-phosphoryl)serine.

The protein belongs to the acyl carrier protein (ACP) family. Post-translationally, 4'-phosphopantetheine is transferred from CoA to a specific serine of apo-ACP by AcpS. This modification is essential for activity because fatty acids are bound in thioester linkage to the sulfhydryl of the prosthetic group.

The protein resides in the cytoplasm. The protein operates within lipid metabolism; fatty acid biosynthesis. Functionally, carrier of the growing fatty acid chain in fatty acid biosynthesis. The chain is Acyl carrier protein from Cereibacter sphaeroides (Rhodobacter sphaeroides).